Reading from the N-terminus, the 261-residue chain is Phosphatidylglycerol--prolipoprotein diacylglyceryl transferase (261 aa).

The next 4 helical transmembrane spans lie at 13-33 (LQIRWYSLSYIFGMIFAYWYI), 50-70 (VISWWVISVILGGRIGYILFY), 86-106 (WNGGMSFHGALVGVMIGMYIF), and 112-132 (IDVLAAFDLGACAVPVGIFFG). R133 serves as a coordination point for a 1,2-diacyl-sn-glycero-3-phospho-(1'-sn-glycerol). 3 helical membrane passes run 169–189 (LYEAFGEGFLLFIITNSLFFF), 197–217 (GMLSSVFCIWYGVIRFFIEFV), and 232–252 (ITMGQLLSIFMIIMGFYFIKL).

The protein belongs to the Lgt family.

It localises to the cell inner membrane. It carries out the reaction L-cysteinyl-[prolipoprotein] + a 1,2-diacyl-sn-glycero-3-phospho-(1'-sn-glycerol) = an S-1,2-diacyl-sn-glyceryl-L-cysteinyl-[prolipoprotein] + sn-glycerol 1-phosphate + H(+). Its pathway is protein modification; lipoprotein biosynthesis (diacylglyceryl transfer). Its function is as follows. Catalyzes the transfer of the diacylglyceryl group from phosphatidylglycerol to the sulfhydryl group of the N-terminal cysteine of a prolipoprotein, the first step in the formation of mature lipoproteins. This is Phosphatidylglycerol--prolipoprotein diacylglyceryl transferase from Ehrlichia canis (strain Jake).